Here is a 182-residue protein sequence, read N- to C-terminus: Peptidyl-prolyl cis-trans isomerase C, mitochondrial (182 aa).

Residues 1–20 (MFKRSIIQQSRLFSNSASRL) constitute a mitochondrion transit peptide. Positions 25–181 (FFDPAVNGTK…AEIVIEEAGE (157 aa)) constitute a PPIase cyclophilin-type domain.

It belongs to the cyclophilin-type PPIase family.

The protein localises to the mitochondrion matrix. It carries out the reaction [protein]-peptidylproline (omega=180) = [protein]-peptidylproline (omega=0). Inhibited by the immunosuppressant drug cyclosporin A and by SDZ NIM811, a PPIase inhibitor. Functionally, PPIases accelerate the folding of proteins. It catalyzes the cis-trans isomerization of proline imidic peptide bonds in oligopeptides. This isozyme is required for growth on lactate at high temperature. The polypeptide is Peptidyl-prolyl cis-trans isomerase C, mitochondrial (CPR3) (Saccharomyces cerevisiae (strain ATCC 204508 / S288c) (Baker's yeast)).